A 228-amino-acid polypeptide reads, in one-letter code: Ribonuclease 3 (228 aa).

Positions 5 to 134 (RSKLEKDYGI…FLGALLLDKG (130 aa)) constitute an RNase III domain. E47 lines the Mg(2+) pocket. The active site involves D51. Mg(2+) contacts are provided by D120 and E123. E123 is an active-site residue. One can recognise a DRBM domain in the interval 160–228 (DYKTSLQELL…AAKNALATLQ (69 aa)).

The protein belongs to the ribonuclease III family. Homodimer. Mg(2+) is required as a cofactor.

It localises to the cytoplasm. It catalyses the reaction Endonucleolytic cleavage to 5'-phosphomonoester.. Functionally, digests double-stranded RNA. Involved in the processing of primary rRNA transcript to yield the immediate precursors to the large and small rRNAs (23S and 16S). Processes some mRNAs, and tRNAs when they are encoded in the rRNA operon. Processes pre-crRNA and tracrRNA of type II CRISPR loci if present in the organism. The chain is Ribonuclease 3 from Streptococcus agalactiae serotype III (strain NEM316).